The sequence spans 153 residues: Superoxide dismutase [Cu-Zn] (153 aa).

Positions 45, 47, and 62 each coordinate Cu cation. C56 and C145 are disulfide-bonded. The Zn(2+) site is built by H62, H70, H79, and D82. H119 is a Cu cation binding site.

This sequence belongs to the Cu-Zn superoxide dismutase family. In terms of assembly, homodimer. Cu cation is required as a cofactor. Requires Zn(2+) as cofactor.

Its subcellular location is the cytoplasm. It catalyses the reaction 2 superoxide + 2 H(+) = H2O2 + O2. In terms of biological role, destroys radicals which are normally produced within the cells and which are toxic to biological systems. The sequence is that of Superoxide dismutase [Cu-Zn] from Drosophila yakuba (Fruit fly).